Here is a 354-residue protein sequence, read N- to C-terminus: Guanine nucleotide-binding protein alpha-3 subunit (354 aa).

Gly-2 is lipidated: N-myristoyl glycine. Cys-4 is lipidated: S-palmitoyl cysteine. Positions Lys-32 to Tyr-354 constitute a G-alpha domain. Residues Lys-35 to Thr-48 are G1 motif. Residues Gly-40–Ser-47, Leu-176–Thr-182, Asp-201–Gln-205, Asn-270–Asp-273, and Ala-326 each bind GTP. Residues Ser-47 and Thr-182 each coordinate Mg(2+). A G2 motif region spans residues Asp-174–Thr-182. The interval Phe-197–Arg-206 is G3 motif. A G4 motif region spans residues Ile-266–Asp-273. Positions Thr-324–Thr-329 are G5 motif.

It belongs to the G-alpha family. G(q) subfamily. G proteins are composed of 3 units; alpha, beta and gamma. The alpha chain contains the guanine nucleotide binding site.

In terms of biological role, guanine nucleotide-binding proteins (G proteins) are involved as modulators or transducers in various transmembrane signaling systems. Promotes transcription of 3',5'-cyclic phosphodiesterases pde-1 and pde-5, leading to reduced cGMP levels in sensory neurons. This causes suppression of insulin production and signaling which leads to increased daf-16 activity and contributes to increased adult lifespan and resistance to oxidative stress. In addition, by reducing cGMP levels, inhibits TGF-beta signaling pathways. Involved in behavioral response to P.aeruginosa by controlling the expression of daf-7, a member of the TGF-beta family, in ASJ sensory neurons. In Caenorhabditis briggsae, this protein is Guanine nucleotide-binding protein alpha-3 subunit (gpa-3).